Consider the following 253-residue polypeptide: Claudin domain-containing protein 1 (253 aa).

A helical membrane pass occupies residues 5-25 (FATAFVIACVLSLISTIYMAA). Asn-42 and Asn-72 each carry an N-linked (GlcNAc...) asparagine glycan. The next 3 membrane-spanning stretches (helical) occupy residues 141–161 (FLLP…GLCA), 175–195 (ILHL…VAGI), and 216–236 (FCLA…FIWA).

Belongs to the PMP-22/EMP/MP20 family. Widely distributed in the adult CNS with highest expression in the corpus callosum, caudate nucleus, cerebral cortex, medulla, putamen, spinal cord, substantia nigra and subthalamic nucleus. Weak expression was detected in the adult heart.

It is found in the cell junction. The protein localises to the tight junction. It localises to the cell membrane. Plays a role in negatively regulating the permeability of cells to small molecules. This chain is Claudin domain-containing protein 1 (CLDND1), found in Homo sapiens (Human).